Reading from the N-terminus, the 508-residue chain is Cell death protein 3 (508 aa).

Residues 1–223 (MMRQDRRNLL…FHEEDMNYVD (223 aa)) constitute a propeptide that is removed on maturation. The CARD domain maps to 2–91 (MRQDRRNLLE…HELAAVLEPL (90 aa)). 2 disordered regions span residues 106–130 (PMSP…TRVH) and 148–184 (YTRA…SSAN). The segment covering 118-127 (LSPSTFSSPT) has biased composition (polar residues). The segment covering 171–184 (SPSNSFQSQPSSAN) has biased composition (low complexity). Residues H317 and C360 contribute to the active site. Positions 392 to 407 (GPLFNFLGCVRPQAQQ) are required for interaction with ced-4.

Belongs to the peptidase C14A family. The active form is probably a heterodimer of the p17 subunit with either the p15 or p13 subunit which are all derived from the precursor by autocatalysis. Interacts with octameric ced-4 (two ced-3 zymogens per one ced-4 octamer); the interaction causes the autoproteolytic cleavage and activation of ced-3. Processed ced-3 also interacts with ced-4 octamer to form a stable holoenzyme. Interacts (via large subunit p17) with csp-3; the interaction prevents ced-3 autoactivation and delays ced-4-induced ced-3 processing. Interacts (via large subunit p17 or small subunit p13 or p15) with csp-2; the interaction inhibits ced-3 autoactivation. Interacts (via propeptide) with nucleoporin npp-14; the interaction tethers ced-3 to the nuclear membrane and prevents its autoprocessing in absence of ced-4. Interacts with dct-1. May form a complex composed of ced-3, ced-4 and mac-1. Post-translationally, autocatalytic cleavage removes the propeptide and generates the catalytic subunit p17 and two non-catalytic subunits p15 and p13; autoproteolysis is induced by ced-4 oligomer. Cleaved by caspase csp-1 probably at Asp-146 and Asp-376.

Its subcellular location is the nucleus membrane. The protein resides in the perikaryon. It localises to the synapse. The protein localises to the mitochondrion. It is found in the cytoplasm. Its subcellular location is the perinuclear region. The catalysed reaction is Strict requirement for an Asp residue at position P1 and has a preferred cleavage sequence of Asp-Glu-Val-Asp-|-.. Octameric ced-4 activates zymogen autoprocessing and enhances activity of processed ced-3. Zymogen autoactivation is inhibited by csp-3. csp-3 has no effect on active ced-3. Zymogen autoactivation is inhibited by csp-2. Inhibited by cysteine protease inhibitor iodoacetic acid (CH3COOI). Inhibited by benzyloxycarbonyl-DEVD-fluoro-methyl ketone (zDEVD-fmk). Inhibited by benzyloxycarbonyl-VAD-fluoro-methyl ketone (zVAD-fmk). Not inhibited by N-[N-(L-3-transcarboxirane-2-carbonyl)-leucyl]-agmatine (E-64) or by the serine and cysteine protease inhibitor L-1-chloro-3-[4-to-osylamido]-7-amino-2-heptanone (TLCK). Functionally, acts as a cysteine protease in controlling programmed cell death (apoptosis) by proteolytically activating or inactivating a wide range of substrates. Component of the egl-1, ced-9, ced-4 and ced-3 apoptotic signaling cascade required for the initiation of programmed cell death in cells fated to die during embryonic and postembryonic development. During oogenesis, required for germline apoptosis downstream of ced-9 and ced-4 but independently of egl-1. By cleaving and activating ced-8, promotes phosphatidylserine exposure on the surface of apoptotic cells; phosphatidylserine is a specific marker only present at the surface of apoptotic cells and acts as a specific signal for engulfment. By cleaving and converting dcr-1 into a deoxyribonuclease (DNase), promotes apoptotic chromosomal DNA fragmentation. By cleaving mitochondrial fission protein drp-1, may regulate the removal of mitochondria during apoptosis. During germline apoptosis, cleaves translation initiation factor ifg-1 (isoform p170) promoting cap-independent translation. During male tail morphogenesis, promotes apoptosis of the tail-spike cell downstream of ced-4 but independently of egl-1 and ced-9. By cleaving cnt-1, prevents the activation of the prosurvival akt-1/2 signaling pathway and thus promotes apoptosis. Downstream of ced-4, may play a role in sex-specific cell apoptosis by cleaving sex-determining protein fem-1. May regulate germline apoptosis in response to DNA damage, probably downstream of let-60/ras and mpk-1 pathway. Cleaves ced-9 in vitro. Cleaves csp-2 isoform b resulting in the removal of the propeptide and the generation of csp-2 subunit p31 in vitro. Independently of its apoptotic role has additional functions. Probably by cleaving and thereby activating actin-severing protein gsnl-1, required for the elimination of transient presynaptic components during larval development downstream of egl-1, ced-9 and ced-4 pathway. Together with ain-1, a component of the miRNA-induced-silencing complex (miRISC), regulates temporal cell fate patterning during larval development. Acts in cell fate patterning by cleaving heterochronic protein lin-28, likely promoting its degradation. Also cleaves heterochronic protein lin-14 and exonuclease disl-2 in vitro. Downstream of calreticulin crt-1 and ced-4 and independently of egl-1 and ced-9, plays a role in the initial steps of axonal regrowth following axotomy. Cleaves 14-3-3-like protein ftt-2, tubulin tbb-2 and calreticulin crt-1 in vitro. Plays also a role in resistance to S.typhimurium-mediated infection. The protein is Cell death protein 3 of Caenorhabditis remanei (Caenorhabditis vulgaris).